The sequence spans 218 residues: Thiopurine S-methyltransferase (218 aa).

S-adenosyl-L-methionine-binding residues include Trp10, Leu45, Glu66, and Arg123.

Belongs to the class I-like SAM-binding methyltransferase superfamily. TPMT family.

It localises to the cytoplasm. The enzyme catalyses S-adenosyl-L-methionine + a thiopurine = S-adenosyl-L-homocysteine + a thiopurine S-methylether.. In Shewanella sp. (strain ANA-3), this protein is Thiopurine S-methyltransferase.